The sequence spans 238 residues: tRNA (guanine-N(7)-)-methyltransferase (238 aa).

4 residues coordinate S-adenosyl-L-methionine: Glu68, Glu93, Asp120, and Asp143. Residue Asp143 is part of the active site. Substrate is bound by residues Lys147, Asp179, and 216–219 (TKFE).

This sequence belongs to the class I-like SAM-binding methyltransferase superfamily. TrmB family.

The enzyme catalyses guanosine(46) in tRNA + S-adenosyl-L-methionine = N(7)-methylguanosine(46) in tRNA + S-adenosyl-L-homocysteine. Its pathway is tRNA modification; N(7)-methylguanine-tRNA biosynthesis. Catalyzes the formation of N(7)-methylguanine at position 46 (m7G46) in tRNA. The chain is tRNA (guanine-N(7)-)-methyltransferase from Shewanella baltica (strain OS223).